A 297-amino-acid polypeptide reads, in one-letter code: Bifunctional protein FolD (297 aa).

Residues 169-171, serine 196, and isoleucine 237 contribute to the NADP(+) site; that span reads GRS.

Belongs to the tetrahydrofolate dehydrogenase/cyclohydrolase family. Homodimer.

The enzyme catalyses (6R)-5,10-methylene-5,6,7,8-tetrahydrofolate + NADP(+) = (6R)-5,10-methenyltetrahydrofolate + NADPH. It catalyses the reaction (6R)-5,10-methenyltetrahydrofolate + H2O = (6R)-10-formyltetrahydrofolate + H(+). It functions in the pathway one-carbon metabolism; tetrahydrofolate interconversion. Its function is as follows. Catalyzes the oxidation of 5,10-methylenetetrahydrofolate to 5,10-methenyltetrahydrofolate and then the hydrolysis of 5,10-methenyltetrahydrofolate to 10-formyltetrahydrofolate. The sequence is that of Bifunctional protein FolD from Salinibacter ruber (strain DSM 13855 / M31).